The sequence spans 708 residues: Wall-associated receptor kinase-like 14 (708 aa).

The first 42 residues, 1 to 42 (MLRSIFDFNQRSTKMVMISHKLDLILVFIIVIGGSIFRRVSA), serve as a signal peptide directing secretion. N-linked (GlcNAc...) asparagine glycosylation is found at N43, N88, N101, N131, N158, N167, and N184. Residues 43-285 (NFTVPCNGRC…WRHCRSNLIT (243 aa)) are Extracellular-facing. Residues 286–306 (IVGGTVGGAFLLAALAFFFFC) form a helical membrane-spanning segment. The Cytoplasmic portion of the chain corresponds to 307–708 (KRRRSTPLRS…TNTLLGNIPR (402 aa)). Positions 348 to 629 (FSEKQKLGIG…LEQIRLSGWI (282 aa)) constitute a Protein kinase domain. ATP-binding positions include 354 to 362 (LGIGAYGTV) and K376. The active-site Proton acceptor is the D472. Disordered stretches follow at residues 636-659 (SPAG…SIGS) and 686-708 (VQDP…NIPR). Positions 643 to 652 (SSDRGSERSV) are enriched in basic and acidic residues. Residues 692 to 708 (SAQSSPSTNTLLGNIPR) are compositionally biased toward polar residues.

The protein belongs to the protein kinase superfamily. Ser/Thr protein kinase family.

It localises to the membrane. The catalysed reaction is L-seryl-[protein] + ATP = O-phospho-L-seryl-[protein] + ADP + H(+). It carries out the reaction L-threonyl-[protein] + ATP = O-phospho-L-threonyl-[protein] + ADP + H(+). Functionally, serine/threonine-protein kinase that may function as a signaling receptor of extracellular matrix component. This is Wall-associated receptor kinase-like 14 (WAKL14) from Arabidopsis thaliana (Mouse-ear cress).